Here is a 481-residue protein sequence, read N- to C-terminus: Glutamyl-tRNA(Gln) amidotransferase subunit A (481 aa).

Catalysis depends on charge relay system residues Lys76 and Ser151. Ser175 acts as the Acyl-ester intermediate in catalysis.

The protein belongs to the amidase family. GatA subfamily. As to quaternary structure, heterotrimer of A, B and C subunits.

The enzyme catalyses L-glutamyl-tRNA(Gln) + L-glutamine + ATP + H2O = L-glutaminyl-tRNA(Gln) + L-glutamate + ADP + phosphate + H(+). Allows the formation of correctly charged Gln-tRNA(Gln) through the transamidation of misacylated Glu-tRNA(Gln) in organisms which lack glutaminyl-tRNA synthetase. The reaction takes place in the presence of glutamine and ATP through an activated gamma-phospho-Glu-tRNA(Gln). This is Glutamyl-tRNA(Gln) amidotransferase subunit A from Chlorobaculum parvum (strain DSM 263 / NCIMB 8327) (Chlorobium vibrioforme subsp. thiosulfatophilum).